A 424-amino-acid polypeptide reads, in one-letter code: UDP-N-acetylglucosamine 1-carboxyvinyltransferase (424 aa).

22–23 (KN) is a phosphoenolpyruvate binding site. Position 93 (arginine 93) interacts with UDP-N-acetyl-alpha-D-glucosamine. Cysteine 117 serves as the catalytic Proton donor. The residue at position 117 (cysteine 117) is a 2-(S-cysteinyl)pyruvic acid O-phosphothioketal. Residues 162–165 (KVSV), aspartate 307, and isoleucine 329 each bind UDP-N-acetyl-alpha-D-glucosamine.

Belongs to the EPSP synthase family. MurA subfamily.

The protein localises to the cytoplasm. It catalyses the reaction phosphoenolpyruvate + UDP-N-acetyl-alpha-D-glucosamine = UDP-N-acetyl-3-O-(1-carboxyvinyl)-alpha-D-glucosamine + phosphate. It functions in the pathway cell wall biogenesis; peptidoglycan biosynthesis. Cell wall formation. Adds enolpyruvyl to UDP-N-acetylglucosamine. This chain is UDP-N-acetylglucosamine 1-carboxyvinyltransferase, found in Actinobacillus pleuropneumoniae serotype 3 (strain JL03).